Reading from the N-terminus, the 89-residue chain is Protein PerC (89 aa).

Its function is as follows. Transcriptional activator of eaeA/bfpA expression in enteropathogenic E.coli. This Escherichia coli O111:H- protein is Protein PerC (perC).